A 364-amino-acid chain; its full sequence is Cobalt-precorrin-5B C(1)-methyltransferase (364 aa).

It belongs to the CbiD family.

It carries out the reaction Co-precorrin-5B + S-adenosyl-L-methionine = Co-precorrin-6A + S-adenosyl-L-homocysteine. It participates in cofactor biosynthesis; adenosylcobalamin biosynthesis; cob(II)yrinate a,c-diamide from sirohydrochlorin (anaerobic route): step 6/10. Functionally, catalyzes the methylation of C-1 in cobalt-precorrin-5B to form cobalt-precorrin-6A. This is Cobalt-precorrin-5B C(1)-methyltransferase from Thermoplasma acidophilum (strain ATCC 25905 / DSM 1728 / JCM 9062 / NBRC 15155 / AMRC-C165).